A 1450-amino-acid chain; its full sequence is Arf-GAP with Rho-GAP domain, ANK repeat and PH domain-containing protein 1 (1450 aa).

Residues D6–S70 form the SAM domain. Residues P81 to R90 are required for interaction with SH3KBP1. Disordered regions lie at residues F89–L144 and T173–S302. Residues P92–L102 show a composition bias toward pro residues. Residues Q190–P199 show a composition bias toward low complexity. Pro residues predominate over residues Q200–P219. Composition is skewed to acidic residues over residues E225–E236 and E269–H286. S229 carries the post-translational modification Phosphoserine. A Phosphotyrosine; by PTK6 modification is found at Y231. One can recognise a PH 1 domain in the interval P327–A419. At T354 the chain carries Phosphothreonine. Position 428 is a phosphoserine (S428). Y431 and Y504 each carry phosphotyrosine. Residues Q440–A529 enclose the PH 2 domain. In terms of domain architecture, Arf-GAP spans S535–E660. A C4-type zinc finger spans residues C550–E576. S738 carries the post-translational modification Phosphoserine. Positions T743–V850 constitute a PH 3 domain. The 186-residue stretch at A954 to F1139 folds into the Rho-GAP domain. One can recognise a Ras-associating domain in the interval G1172 to A1261. The PH 4 domain maps to G1274 to H1396. Phosphoserine is present on residues S1428 and S1435.

In terms of assembly, interacts with SH3KBP1/CIN85 (via SH3 domains). The interaction is independent of EGF and does not affect ARAP1 GTPase-activating activity but is involved in regulating ubiquitination and endocytic trafficking of EGFR. ARAP1 competes with E3 ubiquitin-protein ligase CBL for binding to SH3KBP1, preventing interaction of CBL with SH3KBP1; this is likely to regulate SH3KBP1-mediated internalization of EGFR. Interacts with TNFRSF10A. In terms of processing, phosphorylated by PTK6 following EGF stimulation which enhances EGFR signaling by delaying EGFR down-regulation; the interaction is mediated by the SH2 domain of PTK6. Phosphorylation promotes association with the Golgi apparatus and endosomes. Detected in heart, skeletal muscle, spleen, kidney, liver, placenta, lung, peripheral blood leukocytes, adrenal gland, bone marrow, brain, lymph node, mammary gland, prostate, spinal cord, stomach, thyroid and trachea.

The protein resides in the cytoplasm. Its subcellular location is the golgi apparatus. The protein localises to the trans-Golgi network. It is found in the golgi stack. It localises to the cell membrane. The protein resides in the endosome. Its subcellular location is the multivesicular body. The protein localises to the cell projection. It is found in the ruffle. It localises to the podosome. The protein resides in the early endosome. In terms of biological role, phosphatidylinositol 3,4,5-trisphosphate-dependent GTPase-activating protein that modulates actin cytoskeleton remodeling by regulating ARF and RHO family members. Activated by phosphatidylinositol 3,4,5-trisphosphate (PtdIns(3,4,5)P3) binding and, to a lesser extent, by phosphatidylinositol 3,4-bisphosphate (PtdIns(3,4)P2) binding. Has a preference for ARF1 and ARF5. Positively regulates the ring size of circular dorsal ruffles and promotes macropinocytosis. Acts as a bridging factor in osteoclasts to control actin and membrane dynamics. Regulates the condensing of osteoclast podosomes into sealing zones which segregate the bone-facing membrane from other membrane domains and are required for osteoclast resorption activity. Also regulates recruitment of the AP-3 complex to endosomal membranes and trafficking of lysosomal membrane proteins to the ruffled membrane border of osteoclasts to modulate bone resorption. Regulates the endocytic trafficking of EGFR. Regulates the incorporation of CD63 and CD9 into multivesicular bodies. Required in the retinal pigment epithelium (RPE) for photoreceptor survival due to its role in promoting RPE phagocytosis. The chain is Arf-GAP with Rho-GAP domain, ANK repeat and PH domain-containing protein 1 (ARAP1) from Homo sapiens (Human).